We begin with the raw amino-acid sequence, 30 residues long: Dermonecrotic toxin LlSicTox-alphaIII-1 (30 aa).

Residue His12 is part of the active site.

The protein belongs to the arthropod phospholipase D family. Class I subfamily. Mg(2+) serves as cofactor. Post-translationally, contains 1 disulfide bond. Expressed by the venom gland.

The protein localises to the secreted. The enzyme catalyses an N-(acyl)-sphingosylphosphocholine = an N-(acyl)-sphingosyl-1,3-cyclic phosphate + choline. It catalyses the reaction an N-(acyl)-sphingosylphosphoethanolamine = an N-(acyl)-sphingosyl-1,3-cyclic phosphate + ethanolamine. The catalysed reaction is a 1-acyl-sn-glycero-3-phosphocholine = a 1-acyl-sn-glycero-2,3-cyclic phosphate + choline. It carries out the reaction a 1-acyl-sn-glycero-3-phosphoethanolamine = a 1-acyl-sn-glycero-2,3-cyclic phosphate + ethanolamine. Functionally, dermonecrotic toxins cleave the phosphodiester linkage between the phosphate and headgroup of certain phospholipids (sphingolipid and lysolipid substrates), forming an alcohol (often choline) and a cyclic phosphate. This toxin acts on sphingomyelin (SM). It may also act on ceramide phosphoethanolamine (CPE), lysophosphatidylcholine (LPC) and lysophosphatidylethanolamine (LPE), but not on lysophosphatidylserine (LPS), and lysophosphatidylglycerol (LPG). It acts by transphosphatidylation, releasing exclusively cyclic phosphate products as second products. In vivo, intradermal injection induces dermonecrosis. Induces hemolysis, increased vascular permeability, edema, inflammatory response, and platelet aggregation. This chain is Dermonecrotic toxin LlSicTox-alphaIII-1, found in Loxosceles laeta (South American recluse spider).